Reading from the N-terminus, the 137-residue chain is Small ribosomal subunit protein uS12 (137 aa).

The segment at 1–57 (MPTINQLIRKGRKSKGSKSNSPALNFGYNSYKKVQTNNSAPQKRGVATRVGTMTPKK) is disordered. Positions 32 to 41 (KKVQTNNSAP) are enriched in polar residues. D102 carries the post-translational modification 3-methylthioaspartic acid.

Belongs to the universal ribosomal protein uS12 family. In terms of assembly, part of the 30S ribosomal subunit. Contacts proteins S8 and S17. May interact with IF1 in the 30S initiation complex.

Its function is as follows. With S4 and S5 plays an important role in translational accuracy. Interacts with and stabilizes bases of the 16S rRNA that are involved in tRNA selection in the A site and with the mRNA backbone. Located at the interface of the 30S and 50S subunits, it traverses the body of the 30S subunit contacting proteins on the other side and probably holding the rRNA structure together. The combined cluster of proteins S8, S12 and S17 appears to hold together the shoulder and platform of the 30S subunit. This chain is Small ribosomal subunit protein uS12, found in Ligilactobacillus salivarius (strain UCC118) (Lactobacillus salivarius).